Reading from the N-terminus, the 444-residue chain is Phosphoglucosamine mutase (444 aa).

S101 serves as the catalytic Phosphoserine intermediate. 4 residues coordinate Mg(2+): S101, D240, D242, and D244. S101 carries the post-translational modification Phosphoserine.

This sequence belongs to the phosphohexose mutase family. Mg(2+) is required as a cofactor. Activated by phosphorylation.

It catalyses the reaction alpha-D-glucosamine 1-phosphate = D-glucosamine 6-phosphate. Functionally, catalyzes the conversion of glucosamine-6-phosphate to glucosamine-1-phosphate. This chain is Phosphoglucosamine mutase, found in Photobacterium profundum (strain SS9).